The primary structure comprises 518 residues: Integrator complex subunit 14 (518 aa).

The VWFA domain occupies 2 to 204 (PTVVVMDVSL…KNVQSMFGKL (203 aa)). Mg(2+) is bound by residues Ser-10, Ser-12, and Thr-86. Residues 373–394 (SDAKENPYGDDDNKSPFPLQPK) form a disordered region. Positions 374-386 (DAKENPYGDDDNK) are enriched in basic and acidic residues.

The protein belongs to the Integrator subunit 14 family. As to quaternary structure, component of the Integrator complex, composed of core subunits INTS1, INTS2, INTS3, INTS4, INTS5, INTS6, INTS7, INTS8, INTS9/RC74, INTS10, INTS11/CPSF3L, INTS12, INTS13, INTS14 and INTS15. The core complex associates with protein phosphatase 2A subunits PPP2CA and PPP2R1A, to form the Integrator-PP2A (INTAC) complex. INTS14 is part of the tail subcomplex, composed of INTS10, INTS13, INTS14 and INTS15.

The protein resides in the nucleus. Its function is as follows. Component of the integrator complex, a multiprotein complex that terminates RNA polymerase II (Pol II) transcription in the promoter-proximal region of genes. The integrator complex provides a quality checkpoint during transcription elongation by driving premature transcription termination of transcripts that are unfavorably configured for transcriptional elongation: the complex terminates transcription by (1) catalyzing dephosphorylation of the C-terminal domain (CTD) of Pol II subunit POLR2A/RPB1 and SUPT5H/SPT5, (2) degrading the exiting nascent RNA transcript via endonuclease activity and (3) promoting the release of Pol II from bound DNA. The integrator complex is also involved in terminating the synthesis of non-coding Pol II transcripts, such as enhancer RNAs (eRNAs), small nuclear RNAs (snRNAs), telomerase RNAs and long non-coding RNAs (lncRNAs). Within the integrator complex, INTS14 is part of the integrator tail module that acts as a platform for the recruitment of transcription factors at promoters. In Gallus gallus (Chicken), this protein is Integrator complex subunit 14.